Reading from the N-terminus, the 277-residue chain is Probable endonuclease 4 (277 aa).

Zn(2+) contacts are provided by His-67, His-107, Glu-142, Asp-176, His-179, His-211, Asp-224, His-226, and Glu-256.

Belongs to the AP endonuclease 2 family. It depends on Zn(2+) as a cofactor.

It catalyses the reaction Endonucleolytic cleavage to 5'-phosphooligonucleotide end-products.. Functionally, endonuclease IV plays a role in DNA repair. It cleaves phosphodiester bonds at apurinic or apyrimidinic (AP) sites, generating a 3'-hydroxyl group and a 5'-terminal sugar phosphate. The polypeptide is Probable endonuclease 4 (Akkermansia muciniphila (strain ATCC BAA-835 / DSM 22959 / JCM 33894 / BCRC 81048 / CCUG 64013 / CIP 107961 / Muc)).